The following is a 605-amino-acid chain: Threonine--tRNA ligase (605 aa).

The catalytic stretch occupies residues D195–P497. Zn(2+) is bound by residues C294, H345, and H474.

Belongs to the class-II aminoacyl-tRNA synthetase family. In terms of assembly, homodimer. Requires Zn(2+) as cofactor.

It is found in the cytoplasm. The enzyme catalyses tRNA(Thr) + L-threonine + ATP = L-threonyl-tRNA(Thr) + AMP + diphosphate + H(+). Its function is as follows. Catalyzes the attachment of threonine to tRNA(Thr) in a two-step reaction: L-threonine is first activated by ATP to form Thr-AMP and then transferred to the acceptor end of tRNA(Thr). Also edits incorrectly charged L-seryl-tRNA(Thr). The protein is Threonine--tRNA ligase of Thermosynechococcus vestitus (strain NIES-2133 / IAM M-273 / BP-1).